A 574-amino-acid chain; its full sequence is Proline--tRNA ligase (574 aa).

The protein belongs to the class-II aminoacyl-tRNA synthetase family. ProS type 1 subfamily. As to quaternary structure, homodimer.

The protein resides in the cytoplasm. The catalysed reaction is tRNA(Pro) + L-proline + ATP = L-prolyl-tRNA(Pro) + AMP + diphosphate. Catalyzes the attachment of proline to tRNA(Pro) in a two-step reaction: proline is first activated by ATP to form Pro-AMP and then transferred to the acceptor end of tRNA(Pro). As ProRS can inadvertently accommodate and process non-cognate amino acids such as alanine and cysteine, to avoid such errors it has two additional distinct editing activities against alanine. One activity is designated as 'pretransfer' editing and involves the tRNA(Pro)-independent hydrolysis of activated Ala-AMP. The other activity is designated 'posttransfer' editing and involves deacylation of mischarged Ala-tRNA(Pro). The misacylated Cys-tRNA(Pro) is not edited by ProRS. In Buchnera aphidicola subsp. Baizongia pistaciae (strain Bp), this protein is Proline--tRNA ligase.